The primary structure comprises 249 residues: Triosephosphate isomerase (249 aa).

Substrate is bound by residues Asn-12 and Lys-14. The residue at position 14 (Lys-14) is an N6-acetyllysine. A 3'-nitrotyrosine modification is found at Tyr-68. Phosphoserine occurs at positions 80 and 106. Lys-142 is covalently cross-linked (Glycyl lysine isopeptide (Lys-Gly) (interchain with G-Cter in SUMO1)). At Lys-149 the chain carries N6-succinyllysine. Lys-156 carries the N6-acetyllysine; alternate modification. Lys-156 carries the post-translational modification N6-succinyllysine; alternate. Ser-159 bears the Phosphoserine mark. Residue Glu-166 is the Proton acceptor of the active site. Position 173 is a phosphothreonine (Thr-173). Lys-194 carries the post-translational modification N6-acetyllysine; alternate. Lys-194 carries the post-translational modification N6-succinyllysine; alternate. Lys-194 carries the post-translational modification N6-methyllysine; alternate. Ser-198 carries the post-translational modification Phosphoserine. Tyr-209 is modified (3'-nitrotyrosine). A Phosphoserine modification is found at Ser-212. A Phosphothreonine modification is found at Thr-214. Ser-223 bears the Phosphoserine mark. The residue at position 238 (Lys-238) is an N6-acetyllysine.

The protein belongs to the triosephosphate isomerase family. In terms of assembly, homodimer.

The protein localises to the cytoplasm. It catalyses the reaction D-glyceraldehyde 3-phosphate = dihydroxyacetone phosphate. The catalysed reaction is dihydroxyacetone phosphate = methylglyoxal + phosphate. It functions in the pathway carbohydrate biosynthesis; gluconeogenesis. It participates in carbohydrate degradation; glycolysis; D-glyceraldehyde 3-phosphate from glycerone phosphate: step 1/1. Triosephosphate isomerase is an extremely efficient metabolic enzyme that catalyzes the interconversion between dihydroxyacetone phosphate (DHAP) and D-glyceraldehyde-3-phosphate (G3P) in glycolysis and gluconeogenesis. In terms of biological role, it is also responsible for the non-negligible production of methylglyoxal a reactive cytotoxic side-product that modifies and can alter proteins, DNA and lipids. This chain is Triosephosphate isomerase, found in Mesocricetus auratus (Golden hamster).